A 604-amino-acid polypeptide reads, in one-letter code: NRPS-independent siderophore synthetase-like protein ankE (604 aa).

It catalyses the reaction cyclo(L-arginyl-(Z)-dehydro-4-O-homoseryl-tyrosyl) + citrate + ATP = NK13650 B + AMP + diphosphate + H(+). It participates in secondary metabolite biosynthesis. Functionally, NRPS-independent siderophore synthetase-like protein; part of the ank cluster that mediates the biosynthesis of NK13650 C, a highly modified cyclo-arginine-tyrosine dipeptide. AnkE is responsible of the production of NK13650 B via ligation of citrate to the ankD product. Within the pathway, the cyclodipeptide synthase ankA acts as the scaffold-generating enzyme and is responsible for formation of the cyclo-Arg-Tyr diketopiperazine (cRY) from L-Arg and L-Tyr. The ankA product cRY is desaturated by the cytochrome P450 monooxygenase ankB to yield a dehydro-cyclodipeptide intermediate. The FAD-dependent monooxygenase ankC then installs the m-OH, ankD catalyzes the attachment of L-homoserine, and ankE ligates citrate to the ankD product to yield NK13650 B. The O-methyltransferase ankF is responsible for methylation of the C-17 phenol group of NK13650 B to produce NK13650 D. Amidation of NK13650 D with L-Asp by ankG then leads to the production of NK13650 C, whereas amidation of NK13650 B produces NK13650 A. The sequence is that of NRPS-independent siderophore synthetase-like protein ankE from Aspergillus thermomutatus (Neosartorya pseudofischeri).